Here is a 103-residue protein sequence, read N- to C-terminus: Large ribosomal subunit protein bL21 (103 aa).

Belongs to the bacterial ribosomal protein bL21 family. Part of the 50S ribosomal subunit. Contacts protein L20.

In terms of biological role, this protein binds to 23S rRNA in the presence of protein L20. The protein is Large ribosomal subunit protein bL21 of Aeromonas salmonicida (strain A449).